The primary structure comprises 274 residues: Nitrate import ATP-binding protein NrtD (274 aa).

The ABC transporter domain occupies 17 to 250 (LHFDCVGKTF…RPREREAVVE (234 aa)). Residue 53–60 (GHSGCGKS) coordinates ATP.

It belongs to the ABC transporter superfamily. Nitrate/nitrite/cyanate uptake transporter (NitT) (TC 3.A.1.16) family. The complex is composed of two ATP-binding proteins (NrtC and NrtD), two transmembrane proteins (NrtB) and a solute-binding protein (NrtA).

The protein resides in the cell inner membrane. The catalysed reaction is nitrate(out) + ATP + H2O = nitrate(in) + ADP + phosphate + H(+). Its function is as follows. Part of the ABC transporter complex NrtABCD involved in nitrate uptake. The complex is probably also involved in nitrite transport. Probably responsible for energy coupling to the transport system. This is Nitrate import ATP-binding protein NrtD from Synechococcus elongatus (strain ATCC 33912 / PCC 7942 / FACHB-805) (Anacystis nidulans R2).